The chain runs to 856 residues: Lon protease homolog 2, peroxisomal (856 aa).

In terms of domain architecture, Lon N-terminal spans 13 to 222 (LPLLLTHEGV…VTIPLLLRQI (210 aa)). 379 to 386 (GPPGVGKT) is a binding site for ATP. A compositionally biased stretch (basic and acidic residues) spans 586–608 (GQHREHKSEHLEAPEGEERKESV). The disordered stretch occupies residues 586–614 (GQHREHKSEHLEAPEGEERKESVPEGSKS). The Lon proteolytic domain maps to 655–841 (LNQPGVAIGL…DEVLNAAFDG (187 aa)). Residues Ser-747 and Lys-790 contribute to the active site. Residues 854 to 856 (SKL) carry the Microbody targeting signal motif.

The protein belongs to the peptidase S16 family.

Its subcellular location is the peroxisome matrix. It catalyses the reaction Hydrolysis of proteins in presence of ATP.. Its function is as follows. ATP-dependent serine protease that mediates the selective degradation of misfolded and unassembled polypeptides in the peroxisomal matrix. Necessary for type 2 peroxisome targeting signal (PTS2)-containing protein processing and facilitates peroxisome matrix protein import. This Xenopus laevis (African clawed frog) protein is Lon protease homolog 2, peroxisomal (lonp2).